A 341-amino-acid chain; its full sequence is Flagellar P-ring protein (341 aa).

A signal peptide spans 1 to 19 (MKQVFLWLIFVLAFHKLLA).

This sequence belongs to the FlgI family. The basal body constitutes a major portion of the flagellar organelle and consists of four rings (L,P,S, and M) mounted on a central rod.

The protein resides in the periplasm. The protein localises to the bacterial flagellum basal body. In terms of biological role, assembles around the rod to form the L-ring and probably protects the motor/basal body from shearing forces during rotation. The polypeptide is Flagellar P-ring protein (Helicobacter acinonychis (strain Sheeba)).